A 153-amino-acid chain; its full sequence is Aspartate carbamoyltransferase regulatory chain (153 aa).

Residues Cys109, Cys114, Cys138, and Cys141 each contribute to the Zn(2+) site.

It belongs to the PyrI family. In terms of assembly, contains catalytic and regulatory chains. Requires Zn(2+) as cofactor.

In terms of biological role, involved in allosteric regulation of aspartate carbamoyltransferase. The protein is Aspartate carbamoyltransferase regulatory chain of Vibrio parahaemolyticus serotype O3:K6 (strain RIMD 2210633).